The primary structure comprises 525 residues: Probable protein kinase UbiB (525 aa).

A Protein kinase domain is found at 118 to 500 (DFERVPVASA…QKRTNRLLQG (383 aa)). ATP contacts are provided by residues 124 to 132 (VASASIAQV) and Lys-150. Asp-285 serves as the catalytic Proton acceptor. A helical transmembrane segment spans residues 501–521 (LLLFGVAVGVGAALARVFLAL).

Belongs to the ABC1 family. UbiB subfamily.

The protein resides in the cell inner membrane. It participates in cofactor biosynthesis; ubiquinone biosynthesis [regulation]. Is probably a protein kinase regulator of UbiI activity which is involved in aerobic coenzyme Q (ubiquinone) biosynthesis. The polypeptide is Probable protein kinase UbiB (Paraburkholderia xenovorans (strain LB400)).